Here is a 405-residue protein sequence, read N- to C-terminus: Na(+)/H(+) antiporter NhaA 1 (405 aa).

The next 11 helical transmembrane spans lie at 20 to 40 (FVSD…AMIV), 68 to 88 (LHLW…GLEV), 105 to 125 (LPVL…VGVV), 134 to 154 (GWAI…GLLG), 163 to 183 (LFLL…IAAF), 186 to 206 (ANLK…MVGM), 214 to 234 (IWPY…SGVH), 263 to 283 (GLAP…NAGV), 301 to 321 (IAAG…VAAV), 334 to 354 (WIEI…SLFI), and 371 to 391 (IGIL…LRLT).

Belongs to the NhaA Na(+)/H(+) (TC 2.A.33) antiporter family.

Its subcellular location is the cell inner membrane. It carries out the reaction Na(+)(in) + 2 H(+)(out) = Na(+)(out) + 2 H(+)(in). Functionally, na(+)/H(+) antiporter that extrudes sodium in exchange for external protons. The chain is Na(+)/H(+) antiporter NhaA 1 from Erythrobacter litoralis (strain HTCC2594).